The primary structure comprises 348 residues: MSESEVRQTEVIPQWKREEVDELVDFIESYESVGVVGVAGIPSRQLQSMRRELHGSAAVRMSRNTLVNRALDEVNDGFEELKEYIAGQVALIGTNDNPFALFKELEASKTPAPINAGEVAPNDIVIPEGDTGVDPGPFVGELQQVGASARIMDGSIMVTEDSNVLSEGEEVSEELANVLAELGIEPKEVGLDLRGVFSEGVLFEPDELAIDVDEYRADIQSAVSAATNLSVNAVYPTAQTAPTLIAKATSEAKAVGLFANIESPDFMPELISKADAQLRALAANIDDEEALPEELRGVSAADTGAAEEEESTDEEAADADQADAAEDDDAADDDGDDEDAGDALGSLF.

Positions 291–348 are disordered; it reads LPEELRGVSAADTGAAEEEESTDEEAADADQADAAEDDDAADDDGDDEDAGDALGSLF. Residues 305 to 341 are compositionally biased toward acidic residues; it reads AAEEEESTDEEAADADQADAAEDDDAADDDGDDEDAG.

It belongs to the universal ribosomal protein uL10 family. In terms of assembly, part of the 50S ribosomal subunit. Forms part of the ribosomal stalk which helps the ribosome interact with GTP-bound translation factors. Forms a heptameric L10(L12)2(L12)2(L12)2 complex, where L10 forms an elongated spine to which the L12 dimers bind in a sequential fashion.

Functionally, forms part of the ribosomal stalk, playing a central role in the interaction of the ribosome with GTP-bound translation factors. The sequence is that of Large ribosomal subunit protein uL10 from Haloferax volcanii (strain ATCC 29605 / DSM 3757 / JCM 8879 / NBRC 14742 / NCIMB 2012 / VKM B-1768 / DS2) (Halobacterium volcanii).